The primary structure comprises 273 residues: Orotidine 5'-phosphate decarboxylase (273 aa).

The Proton donor role is filled by Lys96.

This sequence belongs to the OMP decarboxylase family. Type 2 subfamily.

The catalysed reaction is orotidine 5'-phosphate + H(+) = UMP + CO2. Its pathway is pyrimidine metabolism; UMP biosynthesis via de novo pathway; UMP from orotate: step 2/2. The sequence is that of Orotidine 5'-phosphate decarboxylase from Flavobacterium johnsoniae (strain ATCC 17061 / DSM 2064 / JCM 8514 / BCRC 14874 / CCUG 350202 / NBRC 14942 / NCIMB 11054 / UW101) (Cytophaga johnsonae).